The chain runs to 234 residues: VIGGDECNINEHRFLVAVYEGTNWTFICGGVLIHPEWVITAEHCARRRMNLVFGMHRKSEKFDDEQERYPKKRYFIRCNKTRTSWDEDIMLIRLNKPVNNSEHIAPLSLPSNPPIVGSDCRVMGWGSINRRIDVLSDEPRCANINLHNFTMCHGLFRKMPKKGRVLCAGDLRGRRDSCNSDSGGPLICNEELHGIVARGPNPCAQPNKPALYTSIYDYRDWVNNVIAGNATCSP.

A Peptidase S1 domain is found at 1-227; the sequence is VIGGDECNIN…YRDWVNNVIA (227 aa). Intrachain disulfides connect Cys7-Cys141, Cys28-Cys44, Cys78-Cys232, Cys120-Cys188, Cys152-Cys167, and Cys178-Cys203. The N-linked (GlcNAc...) asparagine glycan is linked to Asn23. Residue His43 is the Charge relay system of the active site. Asn79 is a glycosylation site (N-linked (GlcNAc...) asparagine). The active-site Charge relay system is Asp88. 2 N-linked (GlcNAc...) asparagine glycosylation sites follow: Asn99 and Asn148. Ser182 (charge relay system) is an active-site residue. Asn229 is a glycosylation site (N-linked (GlcNAc...) asparagine).

The protein belongs to the peptidase S1 family. Snake venom subfamily. Monomer. Expressed by the venom gland.

The protein resides in the secreted. The enzyme catalyses Selective cleavage of Arg-|-Xaa bond in fibrinogen, to form fibrin, and release fibrinopeptide A. The specificity of further degradation of fibrinogen varies with species origin of the enzyme.. Its function is as follows. Thrombin-like snake venom serine protease that acts as an anticoagulant. It cleaves fibrinogen (FGA) to split off the A-fibrinopeptides (A, AY and AP), but not the B-fibrinopeptide. The resulting fibrin polymers are imperfectly formed and much smaller in size (1 to 2 um long) than the fibrin polymers produced by the action of thrombin. These ancrod-induced microthrombi are friable, unstable, urea-soluble and have significantly degraded alpha chains. They do not cross-link to form thrombi. They are markedly susceptible to digestion by plasmin and are rapidly removed from circulation by either reticuloendothelial phagocytosis or normal fibrinolysis, or both. Anticoagulation through the removal of fibrinogen from the blood is rapid, occurring within hours following its administration. It does not activate plasminogen and does not degrade preformed, fully cross-linked thrombin fibrin. It also reduces the level of plasminogen activator inhibitor (PAI) and may stimulate the release of tissue plasminogen activator (PLAT) from the endothelium. The profibrinolytic effect of these 2 actions appears to be limited to local microthrombus degradation. This chain is Thrombin-like enzyme ancrod, found in Calloselasma rhodostoma (Malayan pit viper).